The primary structure comprises 504 residues: Tegument protein VP16 homolog (504 aa).

Disordered regions lie at residues 354–381, 395–421, and 435–486; these read EAGG…RLQR, ATPR…QGRR, and RSGP…ANPF. Residues 361–378 are compositionally biased toward low complexity; it reads RSGSTRTRGRAARSTTGR. Residues 447–460 are compositionally biased toward low complexity; it reads PVRSGLGLSRARGS.

It belongs to the herpesviridae tegument protein VP16 protein family. As to quaternary structure, associates with the VP16-induced complex; binding to host HCFC1 activates VP16 for association with the octamer motif-binding host protein POU2F1, to form a multiprotein-DNA complex responsible for activating transcription of the viral immediate early genes.

The protein localises to the virion tegument. It localises to the host nucleus. Transcriptional activator of immediate-early (IE) gene products (alpha genes). Acts as a key activator of lytic infection by initiating the lytic program through the assembly of the transcriptional regulatory VP16-induced complex composed of VP16 and two cellular factors, HCFC1 and POU2F1. VP16-induced complex represents a regulatory switch: when it is on, it promotes IE-gene expression and thus lytic infection, and when it is off, it limits IE-gene transcription favoring latent infection. In terms of biological role, may play a role in the aggregation of tegument proteins around nucleocapsids during virus morphogenesis. The protein is Tegument protein VP16 homolog of Bos taurus (Bovine).